A 130-amino-acid chain; its full sequence is MSMQDPIADMLTRIRNGQAANKAAVTMPSSKLKVAIANVLKEEGFIEDFKVEGDTKPELELTLKYFQGKAVVESIQRVSRPGLRIYKRKDELPKVMAGLGIAVVSTSKGVMTDRAARQAGLGGEIICYVA.

This sequence belongs to the universal ribosomal protein uS8 family. Part of the 30S ribosomal subunit. Contacts proteins S5 and S12.

In terms of biological role, one of the primary rRNA binding proteins, it binds directly to 16S rRNA central domain where it helps coordinate assembly of the platform of the 30S subunit. The chain is Small ribosomal subunit protein uS8 from Shigella boydii serotype 18 (strain CDC 3083-94 / BS512).